The primary structure comprises 178 residues: Major non-capsid protein (178 aa).

It belongs to the tenuiviruses NCP family.

It is found in the host cytoplasm. Functionally, induces the formation of large intracellular inclusion body, organized in amorphous and crystalline arrays. Presumably the main cause of the stripe disease observed in host. The polypeptide is Major non-capsid protein (Rice stripe virus (isolate T) (RSV)).